The chain runs to 59 residues: UPF0434 protein Rsph17025_2896 (59 aa).

It belongs to the UPF0434 family.

The chain is UPF0434 protein Rsph17025_2896 from Cereibacter sphaeroides (strain ATCC 17025 / ATH 2.4.3) (Rhodobacter sphaeroides).